Here is a 195-residue protein sequence, read N- to C-terminus: CDP-diacylglycerol--glycerol-3-phosphate 3-phosphatidyltransferase (195 aa).

Helical transmembrane passes span 7-24, 60-81, 134-150, and 157-173; these read ITVLRVLLIPIFILLFYL, FGAFLDPVADKLMVAVALVLLV, MLALVILLANPPAFTFW, and FLLIAGGLTLWSMLQYL.

Belongs to the CDP-alcohol phosphatidyltransferase class-I family.

It localises to the cell membrane. It catalyses the reaction a CDP-1,2-diacyl-sn-glycerol + sn-glycerol 3-phosphate = a 1,2-diacyl-sn-glycero-3-phospho-(1'-sn-glycero-3'-phosphate) + CMP + H(+). It functions in the pathway phospholipid metabolism; phosphatidylglycerol biosynthesis; phosphatidylglycerol from CDP-diacylglycerol: step 1/2. Functionally, this protein catalyzes the committed step to the synthesis of the acidic phospholipids. The protein is CDP-diacylglycerol--glycerol-3-phosphate 3-phosphatidyltransferase (pgsA) of Pseudomonas fluorescens.